A 213-amino-acid polypeptide reads, in one-letter code: MGKELTIAMPKGRIFEEAADMLRKAGYQLPEEFDDSRKLIIQVPEENLRFILAKPMDVTTYVEHGVADVGIAGKDVLLEEERDVYEVLDLNISKCRLAVAGLPETAADTVAPRVATKYPNVASSYFREQGEQVEIIKLNGSIELAPLIGLAGRIVDIVSTGQTLRENGLVETEKICDITSRLIVNPVSYRMKDAVIDEMASRLSLIVEGEKAK.

The protein belongs to the ATP phosphoribosyltransferase family. Short subfamily. As to quaternary structure, heteromultimer composed of HisG and HisZ subunits.

Its subcellular location is the cytoplasm. The enzyme catalyses 1-(5-phospho-beta-D-ribosyl)-ATP + diphosphate = 5-phospho-alpha-D-ribose 1-diphosphate + ATP. It functions in the pathway amino-acid biosynthesis; L-histidine biosynthesis; L-histidine from 5-phospho-alpha-D-ribose 1-diphosphate: step 1/9. Functionally, catalyzes the condensation of ATP and 5-phosphoribose 1-diphosphate to form N'-(5'-phosphoribosyl)-ATP (PR-ATP). Has a crucial role in the pathway because the rate of histidine biosynthesis seems to be controlled primarily by regulation of HisG enzymatic activity. The protein is ATP phosphoribosyltransferase of Bacillus licheniformis (strain ATCC 14580 / DSM 13 / JCM 2505 / CCUG 7422 / NBRC 12200 / NCIMB 9375 / NCTC 10341 / NRRL NRS-1264 / Gibson 46).